We begin with the raw amino-acid sequence, 1205 residues long: Nitric oxide synthase 3 (1205 aa).

The interval 1 to 73 (MGNLKSVGQE…PPEGPKFPRV (73 aa)) is disordered. Residue glycine 2 is the site of N-myristoyl glycine attachment. 2 S-palmitoyl cysteine lipidation sites follow: cysteine 15 and cysteine 26. The span at 15–27 (CGLGLGLGLGLCG) shows a compositional bias: gly residues. The segment covering 33 to 47 (TPAPEPSRAPAPATP) has biased composition (pro residues). Zn(2+) contacts are provided by cysteine 96 and cysteine 101. An interaction with NOSIP region spans residues 100-488 (RCLGSLVLPR…PDPWKGSAAK (389 aa)). (6R)-L-erythro-5,6,7,8-tetrahydrobiopterin is bound at residue serine 104. Serine 116 bears the Phosphoserine; by CDK5 mark. Heme b is bound at residue cysteine 186. L-arginine is bound by residues glutamine 249, tryptophan 358, tyrosine 359, glutamate 363, and asparagine 368. (6R)-L-erythro-5,6,7,8-tetrahydrobiopterin-binding residues include alanine 448, tryptophan 449, and phenylalanine 462. Tyrosine 477 serves as a coordination point for heme b. The interval 492–512 (IARKKTFKEVANAVKISASLM) is calmodulin-binding. Phosphothreonine; by AMPK is present on threonine 497. The Flavodoxin-like domain occupies 522 to 705 (ASILYASETV…AFRGWAQAAF (184 aa)). 6 residues coordinate FMN: serine 528, glutamate 529, threonine 530, arginine 532, serine 574, and threonine 575. 3 positions are modified to phosphoserine: serine 617, serine 635, and serine 640. The FMN site is built by serine 656, cysteine 663, glutamate 689, and glutamine 693. An FAD-binding FR-type domain is found at 758 to 1004 (RKMFQATVLS…IRAAPSFRLP (247 aa)). Residue arginine 778 participates in NADP(+) binding. Histidine 800 is an FAD binding site. The segment at 820 to 848 (EDPTPPTESVGVEQLEKGSPGGPPPSWVR) is disordered. A Phosphoserine modification is found at serine 838. 9 residues coordinate FAD: arginine 940, tyrosine 942, serine 943, threonine 958, alanine 960, tyrosine 964, valine 977, cysteine 978, and serine 979. NADP(+) is bound by residues threonine 1018, arginine 1051, serine 1080, arginine 1081, lysine 1087, tyrosine 1089, and glutamine 1091. At threonine 1177 the chain carries Phosphothreonine. A Phosphoserine; by AMPK modification is found at serine 1179. Phosphoserine is present on serine 1181.

Belongs to the NOS family. In terms of assembly, homodimer. Interacts with NOSIP and NOSTRIN. Interacts with HSP90AB1. Forms a complex with ASL, ASS1 and SLC7A1; the complex regulates cell-autonomous L-arginine synthesis and citrulline recycling while channeling extracellular L-arginine to nitric oxide synthesis pathway. Heme b is required as a cofactor. The cofactor is FAD. Requires FMN as cofactor. It depends on (6R)-L-erythro-5,6,7,8-tetrahydrobiopterin as a cofactor. Phosphorylation by AMPK at Ser-1179 in the presence of Ca(2+)-calmodulin (CaM) activates activity. In absence of Ca(2+)-calmodulin, AMPK also phosphorylates Thr-497, resulting in inhibition of activity. Phosphorylation of Ser-116 by CDK5 reduces activity.

It is found in the membrane. Its subcellular location is the caveola. It localises to the cytoplasm. The protein resides in the cytoskeleton. The protein localises to the golgi apparatus. It is found in the cell membrane. The enzyme catalyses 2 L-arginine + 3 NADPH + 4 O2 + H(+) = 2 L-citrulline + 2 nitric oxide + 3 NADP(+) + 4 H2O. Stimulated by calcium/calmodulin. Inhibited by NOSIP and NOSTRIN. Produces nitric oxide (NO) which is implicated in vascular smooth muscle relaxation through a cGMP-mediated signal transduction pathway. NO mediates vascular endothelial growth factor (VEGF)-induced angiogenesis in coronary vessels and promotes blood clotting through the activation of platelets. The protein is Nitric oxide synthase 3 (NOS3) of Sus scrofa (Pig).